We begin with the raw amino-acid sequence, 348 residues long: Phosphate acyltransferase (348 aa).

This sequence belongs to the PlsX family. Homodimer. Probably interacts with PlsY.

Its subcellular location is the cytoplasm. It carries out the reaction a fatty acyl-[ACP] + phosphate = an acyl phosphate + holo-[ACP]. The protein operates within lipid metabolism; phospholipid metabolism. In terms of biological role, catalyzes the reversible formation of acyl-phosphate (acyl-PO(4)) from acyl-[acyl-carrier-protein] (acyl-ACP). This enzyme utilizes acyl-ACP as fatty acyl donor, but not acyl-CoA. The sequence is that of Phosphate acyltransferase from Leuconostoc citreum (strain KM20).